We begin with the raw amino-acid sequence, 453 residues long: Serine/threonine-protein phosphatase 2A 55 kDa regulatory subunit B delta isoform (453 aa).

4 WD repeats span residues 32 to 71 (AEAD…KGRA), 97 to 138 (EIEE…KRAE), 181 to 219 (AHTY…RSFN), and 230 to 270 (ELTE…LCDR). The residue at position 285 (Ser285) is a Phosphoserine. 3 WD repeats span residues 289-327 (EIIS…RPVE), 344-385 (ENDC…DVTL), and 420-452 (DFNK…QDKI). Residue Tyr305 is modified to Phosphotyrosine. Thr308 is modified (phosphothreonine).

This sequence belongs to the phosphatase 2A regulatory subunit B family. PP2A consists of a common heterodimeric core enzyme, composed of a 36 kDa catalytic subunit (subunit C) and a 65 kDa constant regulatory subunit (PR65 or subunit A), that associates with a variety of regulatory subunits. Proteins that associate with the core dimer include three families of regulatory subunits B (the R2/B/PR55/B55, R3/B''/PR72/PR130/PR59 and R5/B'/B56 families), the 48 kDa variable regulatory subunit, viral proteins, and cell signaling molecules. Interacts with IER5.

The protein localises to the cytoplasm. Substrate-recognition subunit of protein phosphatase 2A (PP2A) that plays a key role in cell cycle by controlling mitosis entry and exit. Involved in chromosome clustering during late mitosis by mediating dephosphorylation of MKI67. The activity of PP2A complexes containing PPP2R2D (PR55-delta) fluctuate during the cell cycle: the activity is high in interphase and low in mitosis. The sequence is that of Serine/threonine-protein phosphatase 2A 55 kDa regulatory subunit B delta isoform from Mus musculus (Mouse).